Here is a 1473-residue protein sequence, read N- to C-terminus: DNA topoisomerase 2 (1473 aa).

Residues 1–20 form a disordered region; it reads MATKLPLQNSNAANVAKAPA. Residues 9 to 20 are compositionally biased toward low complexity; sequence NSNAANVAKAPA. ATP-binding positions include N91, N120, 148 to 150, and 161 to 168; these read SSN and GRNGYGAK. Residues 345-347 are interaction with DNA; the sequence is NKK. 378–380 is an ATP binding site; sequence QTK. The Toprim domain occupies 455–569; the sequence is CTLILTEGDS…SLLQVPSFLV (115 aa). Mg(2+) is bound by residues E461, D538, and D540. The region spanning 704 to 1163 is the Topo IIA-type catalytic domain; that stretch reads IPSMVDGLKP…TPKSLWLSDL (460 aa). Y794 (O-(5'-phospho-DNA)-tyrosine intermediate) is an active-site residue. The segment at 980 to 989 is interaction with DNA; sequence KLTTTIATSN. 3 disordered regions span residues 1195-1230, 1242-1297, and 1313-1473; these read SGAA…SYSA, KPKA…EVEE, and GSAP…EDDE. Basic residues-rich tracts occupy residues 1200-1216 and 1278-1288; these read KVKR…KTTK and PKGRQGAKKKA. The span at 1351–1360 shows a compositional bias: low complexity; it reads KPAATKAAKP. Composition is skewed to polar residues over residues 1394 to 1404 and 1417 to 1427; these read SPFNKKSSSVM and ENVAGNSSSEK. The segment covering 1453 to 1473 has biased composition (acidic residues); it reads SESESANDSEFDDIEDDEDDE.

Belongs to the type II topoisomerase family. In terms of assembly, homodimer. The cofactor is Mg(2+). Mn(2+) is required as a cofactor. Requires Ca(2+) as cofactor.

It carries out the reaction ATP-dependent breakage, passage and rejoining of double-stranded DNA.. Its function is as follows. Control of topological states of DNA by transient breakage and subsequent rejoining of DNA strands. Topoisomerase II makes double-strand breaks. The protein is DNA topoisomerase 2 (TOP2) of Arabidopsis thaliana (Mouse-ear cress).